A 416-amino-acid chain; its full sequence is Gamma-glutamyl phosphate reductase (416 aa).

This sequence belongs to the gamma-glutamyl phosphate reductase family.

It localises to the cytoplasm. The enzyme catalyses L-glutamate 5-semialdehyde + phosphate + NADP(+) = L-glutamyl 5-phosphate + NADPH + H(+). It participates in amino-acid biosynthesis; L-proline biosynthesis; L-glutamate 5-semialdehyde from L-glutamate: step 2/2. In terms of biological role, catalyzes the NADPH-dependent reduction of L-glutamate 5-phosphate into L-glutamate 5-semialdehyde and phosphate. The product spontaneously undergoes cyclization to form 1-pyrroline-5-carboxylate. This chain is Gamma-glutamyl phosphate reductase, found in Salmonella agona (strain SL483).